The sequence spans 450 residues: Hydrolase ffsE (450 aa).

Residue serine 266 is the Nucleophile of the active site.

This sequence belongs to the AB hydrolase superfamily. FUS2 hydrolase family. As to quaternary structure, homodimer.

Its pathway is mycotoxin biosynthesis. Hydrolase; part of the gene cluster that mediates the biosynthesis of the cytotoxic leucine-containing cytochalasans, including aspochalasin C, aspochalasin E, TMC-169, flavichalasine F, aspergillin PZ, aspochalasin M and flavichalasine G. The first step in the pathway is catalyzed by the hybrid PKS-NRPS ffsA that utilizes 8 units of malonyl-CoA to iteratively assemble the octaketide chain before addition of L-leucine by the C-terminal NRPS modules. Because ffsA lacks a designated enoylreductase (ER) domain, the required activity is provided the enoyl reductase fssC. The methyltransferase (MT) domain of ffsA catalyzes the alpha-methylation at C10 and C14 using S-adenosyl-L-methionine as the methyl-donating cosubstrate. Reduction by the hydrolyase ffsE, followed by dehydration and intra-molecular Diels-Alder cyclization by the Diels-Alderase ffsF then yield the required isoindolone-fused macrocycle. A number of oxidative steps catalyzed by the tailoring cytochrome P450 monooxygenase ffsD, the FAD-linked oxidoreductase ffsJ and the short-chain dehydrogenase/reductase ffsI, are further required to afford the final products. The polypeptide is Hydrolase ffsE (Aspergillus flavipes).